A 106-amino-acid polypeptide reads, in one-letter code: Transcriptional and immune response regulator (106 aa).

Monomer. Interacts with NOTCH2 (via ANK repeats), the interaction inhibits the nuclear translocation of NOTCH2 N2ICD. Interacts (C-terminus) with CBY1 (C-terminus), TCIM competes with CTNNB1 for the interaction with CBY1. As to expression, expressed in liver, expression levels decrease in regenerating liver. In bone marrow, expressed in large progenitor-like cells, cells with ring-shaped nuclei and, at lower, levels in hematopietic stem cell-like cells with round nuclei (at protein level).

The protein resides in the cytoplasm. It localises to the nucleus. Its subcellular location is the nucleolus. It is found in the nucleus speckle. Functionally, seems to be involved in the regulation of cell growth an differentiation, may play different and opposite roles depending on the tissue or cell type. May enhance the WNT-CTNNB1 pathway by relieving antagonistic activity of CBY1. Enhances the proliferation of follicular dendritic cells. Plays a role in the mitogen-activated MAPK2/3 signaling pathway, positively regulates G1-to-S-phase transition of the cell cycle. In endothelial cells, enhances key inflammatory mediators and inflammatory response through the modulation of NF-kappaB transcriptional regulatory activity. Involved in the regulation of heat shock response, seems to play a positive feedback with HSF1 to modulate heat-shock downstream gene expression. Plays a role in the regulation of hematopoiesis even if the mechanisms are unknown. In cancers such as thyroid or lung cancer, it has been described as promoter of cell proliferation, G1-to-S-phase transition and inhibitor of apoptosis. However, it negatively regulates self-renewal of liver cancer cells via suppresion of NOTCH2 signaling. This Mus musculus (Mouse) protein is Transcriptional and immune response regulator.